Here is a 136-residue protein sequence, read N- to C-terminus: uncharacterized protein (136 aa).

Positions 1 to 35 (MTHRAVPCQPRAFSKIKVLVISFLFLMVAFLPFSS) are cleaved as a signal peptide.

This is an uncharacterized protein from Saccharomyces cerevisiae (strain ATCC 204508 / S288c) (Baker's yeast).